We begin with the raw amino-acid sequence, 368 residues long: E3 ubiquitin-protein ligase ATL31 (368 aa).

Residues M1–G23 form the signal peptide. Residues A46–I66 traverse the membrane as a helical segment. Residues C124 to R166 form an RING-type; atypical zinc finger. Residue S247 is modified to Phosphoserine. Positions N342 to V368 are disordered. A compositionally biased stretch (polar residues) spans G347–V368.

It belongs to the RING-type zinc finger family. ATL subfamily.

The protein resides in the membrane. It carries out the reaction S-ubiquitinyl-[E2 ubiquitin-conjugating enzyme]-L-cysteine + [acceptor protein]-L-lysine = [E2 ubiquitin-conjugating enzyme]-L-cysteine + N(6)-ubiquitinyl-[acceptor protein]-L-lysine.. It participates in protein modification; protein ubiquitination. Functionally, E3 ubiquitin-protein ligase that is required for the plant C/N response during seedling growth transition. May be involved in the early steps of the plant defense signaling pathway. The sequence is that of E3 ubiquitin-protein ligase ATL31 (ATL31) from Arabidopsis thaliana (Mouse-ear cress).